A 1260-amino-acid chain; its full sequence is uncharacterized protein (1260 aa).

It belongs to the oxoprolinase family.

This is an uncharacterized protein from Schizosaccharomyces pombe (strain 972 / ATCC 24843) (Fission yeast).